Here is a 77-residue protein sequence, read N- to C-terminus: Probable small nuclear ribonucleoprotein G (77 aa).

In terms of domain architecture, Sm spans 4 to 76; that stretch reads THPPELKKYM…VVIMEPKERI (73 aa).

The protein belongs to the snRNP Sm proteins family. In terms of assembly, core component of the spliceosomal U1, U2, U4 and U5 small nuclear ribonucleoproteins (snRNPs), the building blocks of the spliceosome.

The protein localises to the cytoplasm. It localises to the cytosol. Its subcellular location is the nucleus. In terms of biological role, plays a role in pre-mRNA splicing as a core component of the spliceosomal U1, U2, U4 and U5 small nuclear ribonucleoproteins (snRNPs), the building blocks of the spliceosome. This chain is Probable small nuclear ribonucleoprotein G (snr-7), found in Caenorhabditis elegans.